The chain runs to 144 residues: Maximins 7/H6 (144 aa).

Positions methionine 1–alanine 18 are cleaved as a signal peptide. Positions arginine 19–arginine 43 are excised as a propeptide. Asparagine 70 bears the Asparagine amide mark. Residues threonine 74 to arginine 123 constitute a propeptide that is removed on maturation. A Leucine amide modification is found at leucine 143.

It belongs to the bombinin family. In terms of tissue distribution, expressed by the skin glands.

The protein resides in the secreted. Functionally, maximin-7 shows antimicrobial activity against bacteria and against the fungus C.albicans. It has little hemolytic activity. In terms of biological role, maximin-H6 shows antimicrobial activity against bacteria and against the fungus C.albicans. Shows strong hemolytic activity. The sequence is that of Maximins 7/H6 from Bombina maxima (Giant fire-bellied toad).